A 467-amino-acid chain; its full sequence is Fumarate hydratase class II (467 aa).

Substrate contacts are provided by residues 98-100, Arg126, 129-132, 139-141, and Thr187; these read SGT, HPND, and SSN. The active-site Proton donor/acceptor is His188. Ser318 is a catalytic residue. Substrate is bound by residues Ser319 and 324–326; that span reads KVN.

The protein belongs to the class-II fumarase/aspartase family. Fumarase subfamily. As to quaternary structure, homotetramer.

The protein localises to the cytoplasm. It catalyses the reaction (S)-malate = fumarate + H2O. Its pathway is carbohydrate metabolism; tricarboxylic acid cycle; (S)-malate from fumarate: step 1/1. In terms of biological role, involved in the TCA cycle. Catalyzes the stereospecific interconversion of fumarate to L-malate. This chain is Fumarate hydratase class II, found in Escherichia coli O157:H7.